The primary structure comprises 484 residues: Serine/arginine-rich splicing factor 11 (484 aa).

A disordered region spans residues 1-33 (MSNTTVVPSTAGPGPSGGPGGGGGGGGGGGGTE). Serine 2 carries the N-acetylserine modification. A compositionally biased stretch (gly residues) spans 14–32 (GPSGGPGGGGGGGGGGGGT). An RRM domain is found at 33-113 (EVIQVTNVSP…ALIVVPYAEG (81 aa)). Lysine 197 participates in a covalent cross-link: Glycyl lysine isopeptide (Lys-Gly) (interchain with G-Cter in SUMO2). Serine 207 bears the Phosphoserine mark. Lysine 211 participates in a covalent cross-link: Glycyl lysine isopeptide (Lys-Gly) (interchain with G-Cter in SUMO2). At serine 212 the chain carries Phosphoserine. Residues 233 to 484 (ISAAIEPDKK…HHEEDMDMSD (252 aa)) form a disordered region. Basic residues predominate over residues 244–308 (EKRRHSRSRS…ERGRRSRSTS (65 aa)). Tandem repeats lie at residues 247-255 (RHSRSRSRS), 258-265 (RRTPSSSR), 267-274 (RRSRSRSR), 275-282 (RRSHSKSR), 285-292 (RRSKSPRR), 293-300 (RRSHSRER), 302-309 (RRSRSTSK), 321-328 (KRSKTPPK), 334-341 (RRSRSASR), and 346-353 (RRSRSGTR). Residues 247–353 (RHSRSRSRSR…RRRRSRSGTR (107 aa)) form a 10 X 8 AA approximate repeats of R-R-S-R-S-R-S-R region. Over residues 309-320 (KTRDKKKEDKEK) the composition is skewed to basic and acidic residues. Residue serine 323 is modified to Phosphoserine. Threonine 325 is subject to Phosphothreonine. Residues 334-379 (RRSRSASRERRRRRSRSGTRSPKKPRSPKRKLSRSPSPRRHKKEKK) are compositionally biased toward basic residues. 3 stretches are compositionally biased toward basic and acidic residues: residues 380 to 395 (KDKD…ERST), 402 to 424 (KDKE…VTRD), and 433 to 478 (DSEK…HHEE). A phosphoserine mark is found at serine 414 and serine 434. Threonine 447 bears the Phosphothreonine mark. Residues serine 449, serine 456, serine 464, and serine 483 each carry the phosphoserine modification.

It belongs to the splicing factor SR family. As to quaternary structure, interacts with PUF60.

The protein resides in the nucleus. Its function is as follows. May function in pre-mRNA splicing. The sequence is that of Serine/arginine-rich splicing factor 11 (SRSF11) from Homo sapiens (Human).